The primary structure comprises 283 residues: Prepilin leader peptidase/N-methyltransferase (283 aa).

The next 7 membrane-spanning stretches (helical) occupy residues 13–33, 106–126, 128–148, 153–173, 176–196, 216–236, and 259–279; these read VWLL…NVVI, WRYP…GLLW, PGLA…LAAI, QLLP…FNLA, FVPL…LWLI, LLAA…VLIA, and LAFG…NVLG.

This sequence belongs to the peptidase A24 family.

Its subcellular location is the cell inner membrane. It catalyses the reaction Typically cleaves a -Gly-|-Phe- bond to release an N-terminal, basic peptide of 5-8 residues from type IV prepilin, and then N-methylates the new N-terminal amino group, the methyl donor being S-adenosyl-L-methionine.. In terms of biological role, plays a role in type II pseudopili formation by proteolytically removing the leader sequence from substrate proteins and subsequently monomethylating the alpha-amino group of the newly exposed N-terminal phenylalanine. Substrates include proteins required for biogenesis of the type II general secretory apparatus. This Dickeya chrysanthemi (Pectobacterium chrysanthemi) protein is Prepilin leader peptidase/N-methyltransferase (outO).